A 154-amino-acid chain; its full sequence is Putative pre-16S rRNA nuclease (154 aa).

It belongs to the YqgF nuclease family.

The protein resides in the cytoplasm. Functionally, could be a nuclease involved in processing of the 5'-end of pre-16S rRNA. In Rickettsia africae (strain ESF-5), this protein is Putative pre-16S rRNA nuclease.